The following is a 205-amino-acid chain: Molybdopterin synthase catalytic subunit (205 aa).

Residues 1 to 36 form a disordered region; sequence MQHPTLQPEVDPNPVVSSSSSSSSSNPLPAHLNPAN. Residues 146-147, lysine 162, and 169-171 contribute to the substrate site; these read HR and KRE. The interval 179–205 is disordered; it reads GEGEGEWRANRDTDSQGNCRGDKVAEG. A compositionally biased stretch (basic and acidic residues) spans 183–205; it reads GEWRANRDTDSQGNCRGDKVAEG.

It belongs to the MoaE family. MOCS2B subfamily. Heterotetramer; composed of 2 small (MOCS2A) and 2 large (MOCS2B) subunits.

The protein localises to the cytoplasm. It catalyses the reaction 2 [molybdopterin-synthase sulfur-carrier protein]-C-terminal-Gly-aminoethanethioate + cyclic pyranopterin phosphate + H2O = molybdopterin + 2 [molybdopterin-synthase sulfur-carrier protein]-C-terminal Gly-Gly + 2 H(+). It functions in the pathway cofactor biosynthesis; molybdopterin biosynthesis. In terms of biological role, catalytic subunit of the molybdopterin synthase complex, a complex that catalyzes the conversion of precursor Z into molybdopterin. Acts by mediating the incorporation of 2 sulfur atoms from thiocarboxylated MOCS2A into precursor Z to generate a dithiolene group. The protein is Molybdopterin synthase catalytic subunit of Ajellomyces capsulatus (strain NAm1 / WU24) (Darling's disease fungus).